Reading from the N-terminus, the 353-residue chain is Sesquiterpene synthase Agr8 (353 aa).

The Mg(2+) site is built by aspartate 82, asparagine 220, serine 224, and glutamate 228. The short motif at 82 to 86 is the DDXXD motif element; the sequence is DEYTD. Arginine 309 and tyrosine 310 together coordinate (2E,6E)-farnesyl diphosphate.

It belongs to the terpene synthase family. It depends on Mg(2+) as a cofactor.

It catalyses the reaction (2E,6E)-farnesyl diphosphate = gamma-muurolene + diphosphate. The enzyme catalyses (2E,6E)-farnesyl diphosphate = alpha-selinene + diphosphate. The catalysed reaction is (2E,6E)-farnesyl diphosphate = delta-cadinene + diphosphate. Functionally, terpene cyclase that catalyzes the cyclization of farnesyl diphosphate (FPP) to various sesquiterpenes, including beta-elemene, gamma-muurolene, alpha-selinene, beta-selinene, beta-cadinene, delta-cadinene and alpha-cadinol. The polypeptide is Sesquiterpene synthase Agr8 (Cyclocybe aegerita (Black poplar mushroom)).